A 578-amino-acid chain; its full sequence is GRAM domain-containing protein 4 (578 aa).

2 disordered regions span residues 23 to 58 and 136 to 159; these read ESPN…AGPG and TEEQ…ERRS. Serine 24 and serine 28 each carry phosphoserine. Positions 44–53 are enriched in basic and acidic residues; it reads SPRDSEELRD. A coiled-coil region spans residues 83–143; sequence HLEIALLEKH…ARTEEQMAQQ (61 aa). The next 3 membrane-spanning stretches (helical) occupy residues 240–260, 334–354, and 356–376; these read VYMN…LAIL, ITQK…FFPY, and LVGL…DFIF. The segment at 415 to 435 is disordered; that stretch reads QTTSSRSYVPSAPAGLGKEED. Positions 445–523 constitute a GRAM domain; sequence GNFHEIFNLT…VDITDIQKYK (79 aa).

Interacts with RTN4 (isoform B). As to expression, expressed in lung and in primary lung squamous cell carcinoma (LSCC).

It localises to the mitochondrion membrane. Its subcellular location is the endoplasmic reticulum membrane. Functionally, plays a role as a mediator of E2F1-induced apoptosis in the absence of p53/TP53. Plays a role as a mediator of E2F1-induced apoptosis in the absence of p53/TP53. Inhibits TLR9 response to nucelic acids and regulates TLR9-mediated innate immune response. The protein is GRAM domain-containing protein 4 of Homo sapiens (Human).